Reading from the N-terminus, the 988-residue chain is Voltage-gated delayed rectifier potassium channel KCNH5 (988 aa).

The Cytoplasmic portion of the chain corresponds to 1–217 (MPGGKRGLVA…LHYCAFKTTW (217 aa)). Residues 14–86 (TFLENIVRRS…TIEKVRQTFD (73 aa)) form the PAS domain. The region spanning 91-143 (NCFEVLLYKKNRTPVWFYMQIAPIRNEHEKVVLFLCTFKDITLFKQPIEDDST) is the PAC domain. Residues 218 to 238 (DWVILILTFYTAIMVPYNVSF) form a helical membrane-spanning segment. Residues 239–243 (KTKQN) lie on the Extracellular side of the membrane. The chain crosses the membrane as a helical span at residues 244–264 (NIAWLVLDSVVDVIFLVDIVL). Residues 265–291 (NFHTTFVGPGGEVISDPKLIRMNYLKT) are Cytoplasmic-facing. Residues 292 to 312 (WFVIDLLSCLPYDIINAFENV) traverse the membrane as a helical segment. At 313–319 (DEGISSL) the chain is on the extracellular side. A helical; Voltage-sensor transmembrane segment spans residues 320–340 (FSSLKVVRLLRLGRVARKLDH). The Cytoplasmic segment spans residues 341 to 346 (YLEYGA). A helical transmembrane segment spans residues 347–367 (AVLVLLVCVFGLVAHWLACIW). The Extracellular segment spans residues 368-419 (YSIGDYEVIDEVTNTIQIDSWLYQLALSIGTPYRYNTSAGIWEGGPSKDSLY). Asn-403 carries an N-linked (GlcNAc...) asparagine glycan. The pore-forming intramembrane region spans 420–440 (VSSLYFTMTSLTTIGFGNIAP). A Selectivity filter motif is present at residues 432–437 (TIGFGN). Residues 441-446 (TTDVEK) are Extracellular-facing. A helical membrane pass occupies residues 447–467 (MFSVAMMMVGSLLYATIFGNV). Topologically, residues 468–988 (TTIFQQMYAN…PESDKDEINF (521 aa)) are cytoplasmic. Residue 550 to 667 (AFRLASDGCL…NSFSRNLTLT (118 aa)) coordinates a nucleoside 3',5'-cyclic phosphate. The segment at 704-715 (HPVRKLFQKFKQ) is calmodulin-binding. Residues 718-742 (ELRNQGSAQSDPERSQLQVESRPLQ) form a disordered region. Residues 721 to 742 (NQGSAQSDPERSQLQVESRPLQ) show a composition bias toward polar residues. A Glycyl lysine isopeptide (Lys-Gly) (interchain with G-Cter in ubiquitin) cross-link involves residue Lys-785. Disordered stretches follow at residues 839 to 897 (LLSE…AKHP) and 946 to 965 (SVPQ…PPQI). Basic and acidic residues predominate over residues 871 to 885 (SDLRLDKAGEARSPL). Residue Ser-883 is modified to Phosphoserine. Positions 909-948 (TLQEVKHELKEDIQLLSCRMTALEKQVAEILKLLSEKSVP) are CAD (involved in subunit assembly).

Belongs to the potassium channel family. H (Eag) (TC 1.A.1.20) subfamily. Kv10.2/KCNH5 sub-subfamily. In terms of assembly, homotetramer. The potassium channel is probably composed of a homo- or heterotetrameric complex of pore-forming alpha subunits that can associate with modulating beta subunits. Heteromultimer with KCNH1/EAG. In terms of tissue distribution, detected in adult testis and in embryonic and adult brain, but not in other tissues. Highly expressed in specific brain areas, such as neocortex, olfactory bulb, primary olfactory cortex and brain stem. In cortex, expression is concentrated in a narrow band toward the middle lamella (layer IV). Moderately expressed in spinal cord, dorsal thalamic nuclei, medial hypothalamus, colliculus, lateral lemniscus, pontine nuclei and Islands of Calleja.

The protein localises to the membrane. The catalysed reaction is K(+)(in) = K(+)(out). Its activity is regulated as follows. Inhibited by low nanomolar concentrations of cytosolic calcium. In terms of biological role, pore-forming (alpha) subunit of a voltage-gated delayed rectifier potassium channel that mediates outward-rectifying potassium currents which, on depolarization, reaches a steady-state level and do not inactivate. The kinetic is characterized by a slow activation time course and a small voltage dependence of the activation time constants, therefore, starts to open at more negative voltages. The activation kinetics depend on the prepulse potential and external divalent cation concentration. The time course of activation is biphasic with a fast and a slowly activating current component. With negative prepulses, the current activation is delayed and slowed down several fold, whereas more positive prepulses speed up activation, therefore the activation rate depends on holding potential. This is Voltage-gated delayed rectifier potassium channel KCNH5 from Rattus norvegicus (Rat).